The primary structure comprises 897 residues: Interleukin enhancer-binding factor 3 (897 aa).

The DZF domain occupies 5 to 378 (RIFVNDDRHV…PMKRPMEEDG (374 aa)). The tract at residues 52–85 (QEKGNSELSEAENMDTPPDDESKEGAGEQKAEHM) is disordered. A compositionally biased stretch (acidic residues) spans 60–73 (SEAENMDTPPDDES). The residue at position 67 (T67) is a Phosphothreonine. Residues 74 to 85 (KEGAGEQKAEHM) are compositionally biased toward basic and acidic residues. K100 is modified (N6-acetyllysine). Phosphothreonine; by PKR is present on T188. S190 is modified (phosphoserine). K297 participates in a covalent cross-link: Glycyl lysine isopeptide (Lys-Gly) (interchain with G-Cter in ubiquitin). T315 carries the post-translational modification Phosphothreonine; by PKR. K348 is covalently cross-linked (Glycyl lysine isopeptide (Lys-Gly) (interchain with G-Cter in SUMO1)). The segment at 363-401 (TTYAITPMKRPMEEDGEEKSPSKKKKKIQKKEEKAEPPQ) is disordered. Residues 371–389 (KRPMEEDGEEKSPSKKKKK) carry the Bipartite nuclear localization signal motif. The segment covering 372-383 (RPMEEDGEEKSP) has biased composition (basic and acidic residues). Phosphoserine occurs at positions 382 and 384. Residue K396 forms a Glycyl lysine isopeptide (Lys-Gly) (interchain with G-Cter in SUMO2) linkage. A DRBM 1 domain is found at 398 to 467 (EPPQAMNALM…AVKVLQDMGL (70 aa)). The residue at position 460 (K460) is an N6-acetyllysine. Disordered stretches follow at residues 466-524 (GLPT…LTKH), 624-662 (GMGGPMHNEAPPPPNIRGRGRGGNIRGRGRGRGFGGTNH), and 720-897 (GDSY…YQYR). The segment covering 472 to 481 (EGRDSSKGED) has biased composition (basic and acidic residues). S476, S477, S482, and S486 each carry phosphoserine. K489 participates in a covalent cross-link: Glycyl lysine isopeptide (Lys-Gly) (interchain with G-Cter in SUMO2). A compositionally biased stretch (low complexity) spans 499 to 508 (VEAVSNPSSV). In terms of domain architecture, DRBM 2 spans 524–590 (HGKNPVMELN…ALAALEKLFP (67 aa)). The tract at residues 609–897 (RGGPKFAAKP…TEHSMNYQYR (289 aa)) is interaction with PRMT1. Positions 644-662 (RGGNIRGRGRGRGFGGTNH) are enriched in gly residues. 3 stretches are compositionally biased toward low complexity: residues 745 to 769 (SYSSGYQSHQGQQQPYNQSQYSSYG), 783 to 794 (GSYSSYSNSYNS), and 802 to 812 (DYSYDSKFNYS). 4 positions are modified to phosphoserine: S794, S812, S814, and S818. Positions 813 to 822 (GSGGRSGGNS) are enriched in gly residues. A compositionally biased stretch (low complexity) spans 823–833 (YGSSGSSYNTG). Residues 834–844 (SHGGYGAGSGG) are compositionally biased toward gly residues. Low complexity predominate over residues 845 to 885 (SSSYQGKQGGYSSQSNYSSPGSSQSYSGPASSYQSSQGGYS).

In terms of assembly, identified in a IGF2BP1-dependent mRNP granule complex containing untranslated mRNAs. Interacts with FUS and SMN. Interacts (via C-terminus) with PRMT1. Forms a complex with ILF2. Can also bind to PRKDC/XRCC7: this may stabilize the interaction of PRKDC/XRCC7 and the heterodimeric complex of XRCC6/KU70 and XRCC5/KU80. Forms a heteromeric complex with ZNF346 and ILF3. Found in a nuclear export complex with XPO5, ILF3, Ran and double-stranded RNA or double-stranded minihelix VA1 RNA. Found in a nuclear export complex with XPO5, RAN, ILF3, ZNF346 and double-stranded RNA. Interacts with XPO5 and ZNF346. Forms a complex with ILF2, YLPM1, KHDRBS1, RBMX, NCOA5 and PPP1CA. Interacts with AGO1 and AGO2. Interacts with DHX36; this interaction occurs in a RNA-dependent manner. Interacts with ELAVL1; this interaction occurs in a RNA-dependent manner. Interacts with HAVCR2; this interaction promotes ILF3 ubiquitination and subsequent degradation. Post-translationally, phosphorylated at Thr-188 and Thr-315 by PKR in response to RNA viruses. This phosphorylation results in the dissociation of ILF2 from the ILF2-ILF3 complex resulting in a cytoplasmic sequestration of ILF3 where it can bind to viral RNAs and impede viral replication. In terms of processing, methylated by protein arginine N-methyltransferase 1.

Its subcellular location is the nucleus. The protein localises to the nucleolus. The protein resides in the cytoplasm. Functionally, RNA-binding protein that plays an essential role in the biogenesis of circular RNAs (circRNAs) which are produced by back-splicing circularization of pre-mRNAs. Within the nucleus, promotes circRNAs processing by stabilizing the regulatory elements residing in the flanking introns of the circularized exons. Plays thereby a role in the back-splicing of a subset of circRNAs. As a consequence, participates in a wide range of transcriptional and post-transcriptional processes. Binds to poly-U elements and AU-rich elements (AREs) in the 3'-UTR of target mRNAs. Upon viral infection, ILF3 accumulates in the cytoplasm and participates in the innate antiviral response. Mechanistically, ILF3 becomes phosphorylated and activated by the double-stranded RNA-activated protein kinase/PKR which releases ILF3 from cellular mature circRNAs. In turn, unbound ILF3 molecules are able to interact with and thus inhibit viral mRNAs. The chain is Interleukin enhancer-binding factor 3 (Ilf3) from Rattus norvegicus (Rat).